Here is a 205-residue protein sequence, read N- to C-terminus: Phospholipase D (205 aa).

Residues 1–22 (MKSKNNKFIAVSISFILGIALG) form the signal peptide. The PLD phosphodiesterase domain maps to 142–169 (VPGIAHNKVIIIDKKKVITGSFNFTVSA). Residues H147, K149, and D154 contribute to the active site.

The protein belongs to the phospholipase D family. In terms of assembly, homodimer.

The protein resides in the secreted. The enzyme catalyses a 1,2-diacyl-sn-glycero-3-phosphocholine + H2O = a 1,2-diacyl-sn-glycero-3-phosphate + choline + H(+). Functionally, could be a virulence factor. In Rickettsia prowazekii (strain Madrid E), this protein is Phospholipase D (pld).